We begin with the raw amino-acid sequence, 89 residues long: Co-chaperonin GroES (89 aa).

The protein belongs to the GroES chaperonin family. Heptamer of 7 subunits arranged in a ring. Interacts with the chaperonin GroEL.

The protein resides in the cytoplasm. Its function is as follows. Together with the chaperonin GroEL, plays an essential role in assisting protein folding. The GroEL-GroES system forms a nano-cage that allows encapsulation of the non-native substrate proteins and provides a physical environment optimized to promote and accelerate protein folding. GroES binds to the apical surface of the GroEL ring, thereby capping the opening of the GroEL channel. The sequence is that of Co-chaperonin GroES from Parabacteroides distasonis (strain ATCC 8503 / DSM 20701 / CIP 104284 / JCM 5825 / NCTC 11152).